The following is a 402-amino-acid chain: Renin (402 aa).

The N-terminal stretch at 1–26 (MGGRRMPLWALLLLWTSCSFSLPTDT) is a signal peptide. A propeptide spans 27-64 (ASFGRILLKKMPSVREILEERGVDMTRISAEWGEFIKK) (activation peptide). N69 carries an N-linked (GlcNAc...) asparagine glycan. In terms of domain architecture, Peptidase A1 spans 84-399 (YYGEIGIGTP…DRHNNRIGFA (316 aa)). The active site involves D102. A disulfide bond links C115 and C122. A glycan (N-linked (GlcNAc...) asparagine) is linked at N139. The cysteines at positions 278 and 282 are disulfide-linked. D287 is an active-site residue. An N-linked (GlcNAc...) asparagine glycan is attached at N320. The cysteines at positions 321 and 358 are disulfide-linked.

It belongs to the peptidase A1 family. In terms of assembly, interacts with ATP6AP2.

It localises to the secreted. The protein localises to the membrane. It catalyses the reaction Cleavage of Leu-|-Xaa bond in angiotensinogen to generate angiotensin I.. Interaction with ATP6AP2 results in a 5-fold increased efficiency in angiotensinogen processing. Functionally, renin is a highly specific endopeptidase, whose only known function is to generate angiotensin I from angiotensinogen in the plasma, initiating a cascade of reactions that produce an elevation of blood pressure and increased sodium retention by the kidney. This Rattus norvegicus (Rat) protein is Renin (Ren1).